Consider the following 552-residue polypeptide: Urocanate hydratase (552 aa).

NAD(+) contacts are provided by residues 49 to 50, Q127, 173 to 175, D193, 239 to 240, 260 to 264, 270 to 271, and Y319; these read GG, GMG, NA, QTSAH, and YI. C407 is an active-site residue. G489 is a binding site for NAD(+).

Belongs to the urocanase family. NAD(+) is required as a cofactor.

The protein localises to the cytoplasm. The catalysed reaction is 4-imidazolone-5-propanoate = trans-urocanate + H2O. Its pathway is amino-acid degradation; L-histidine degradation into L-glutamate; N-formimidoyl-L-glutamate from L-histidine: step 2/3. Its function is as follows. Catalyzes the conversion of urocanate to 4-imidazolone-5-propionate. The sequence is that of Urocanate hydratase from Bacillus cereus (strain ATCC 14579 / DSM 31 / CCUG 7414 / JCM 2152 / NBRC 15305 / NCIMB 9373 / NCTC 2599 / NRRL B-3711).